The following is a 638-amino-acid chain: Ubiquitin-associated and SH3 domain-containing protein B (638 aa).

Ser-9 carries the post-translational modification Phosphoserine. At Thr-12 the chain carries Phosphothreonine. Residues 23-65 (TVKHGSALDVLLSMGFPRARAQKALASTGGRSVQAACDWLFSH) enclose the UBA domain. In terms of domain architecture, SH3 spans 243 to 308 (ANHETLQVIY…PENYITKADE (66 aa)). Positions 369–638 (GPQKRCLFVC…FNWRETLLQE (270 aa)) are protein tyrosine phosphatase. Arg-379 is a catalytic residue. The Tele-phosphohistidine intermediate role is filled by His-380. Residue His-565 is part of the active site.

As to quaternary structure, homodimer. Interacts with JAK2 (in vitro). Interacts with CBL. Part of a complex containing CBL and activated EGFR. Interacts with ubiquitin and with mono-ubiquitinated proteins. Interacts with ZAP70 (ubiquitinated form). Detected in splenic T-cells and B-cells, total spleen, skeletal muscle, heart, lung, kidney, thymus, brain and liver (at protein level). Highly expressed in brain. Detected in heart, spleen, lung, liver, kidney and testis.

Its subcellular location is the cytoplasm. It is found in the nucleus. It carries out the reaction O-phospho-L-tyrosyl-[protein] + H2O = L-tyrosyl-[protein] + phosphate. In terms of biological role, interferes with CBL-mediated down-regulation and degradation of receptor-type tyrosine kinases. Promotes accumulation of activated target receptors, such as T-cell receptors and EGFR, on the cell surface. Exhibits tyrosine phosphatase activity toward several substrates including EGFR, FAK, SYK, and ZAP70. Down-regulates proteins that are dually modified by both protein tyrosine phosphorylation and ubiquitination. This chain is Ubiquitin-associated and SH3 domain-containing protein B (Ubash3b), found in Mus musculus (Mouse).